The chain runs to 923 residues: Isoleucine--tRNA ligase (923 aa).

Residues 57–67 (PYANGDIHMGH) carry the 'HIGH' region motif. Position 553 (Glu-553) interacts with L-isoleucyl-5'-AMP. The 'KMSKS' region motif lies at 594 to 598 (KMSKS). Lys-597 contributes to the ATP binding site. Zn(2+)-binding residues include Cys-888, Cys-891, Cys-908, and Cys-911.

Belongs to the class-I aminoacyl-tRNA synthetase family. IleS type 1 subfamily. As to quaternary structure, monomer. It depends on Zn(2+) as a cofactor.

Its subcellular location is the cytoplasm. It catalyses the reaction tRNA(Ile) + L-isoleucine + ATP = L-isoleucyl-tRNA(Ile) + AMP + diphosphate. Catalyzes the attachment of isoleucine to tRNA(Ile). As IleRS can inadvertently accommodate and process structurally similar amino acids such as valine, to avoid such errors it has two additional distinct tRNA(Ile)-dependent editing activities. One activity is designated as 'pretransfer' editing and involves the hydrolysis of activated Val-AMP. The other activity is designated 'posttransfer' editing and involves deacylation of mischarged Val-tRNA(Ile). This chain is Isoleucine--tRNA ligase, found in Shouchella clausii (strain KSM-K16) (Alkalihalobacillus clausii).